The chain runs to 546 residues: Phosphatidylinositol 4-phosphate 5-kinase type-1 alpha (546 aa).

The 369-residue stretch at 66–434 folds into the PIPK domain; it reads TSSALKGAIQ…RFQRFMCNTV (369 aa). Lys88 is covalently cross-linked (Glycyl lysine isopeptide (Lys-Gly) (interchain with G-Cter in ubiquitin)). Disordered regions lie at residues 442 to 475 and 491 to 518; these read PSPT…SGEH and LGRP…PSFS. 2 stretches are compositionally biased toward low complexity: residues 450-462 and 509-518; these read SGPS…GPSG and GSPVPGPSFS.

Interacts with RAC1. Interacts with TUT1. Forms a complex with CDH1/E-cadherin, CTNNB1/beta-catenin and CTNND1 at the plasma membrane upon calcium stimulation. Found in a ternary complex with IRS1 and DGKZ in the absence of insulin stimulation. Interacts with DGKZ. Interacts with PIP4K2C; the interaction inhibits PIP5K1A kinase activity. Highest expression in brain. Also detected in skeletal muscle, testis, brain and lung.

It localises to the cell membrane. The protein localises to the cytoplasm. The protein resides in the nucleus. Its subcellular location is the nucleus speckle. It is found in the cell projection. It localises to the ruffle. The protein localises to the lamellipodium. The catalysed reaction is a 1,2-diacyl-sn-glycero-3-phospho-(1D-myo-inositol 4-phosphate) + ATP = a 1,2-diacyl-sn-glycero-3-phospho-(1D-myo-inositol-4,5-bisphosphate) + ADP + H(+). It carries out the reaction 1-octadecanoyl-2-(5Z,8Z,11Z,14Z)-eicosatetraenoyl-sn-glycero-3-phospho-1D-myo-inositol 4-phosphate + ATP = 1-octadecanoyl-2-(5Z,8Z,11Z,14Z)-eicosatetraenoyl-sn-glycero-3-phospho-1D-myo-inositol 4,5-bisphosphate + ADP + H(+). It catalyses the reaction 1,2-dihexadecanoyl-sn-glycero-3-phospho-(1D-myo-inositol-4-phosphate) + ATP = 1,2-dihexadecanoyl-sn-glycero-3-phospho-(1D-myo-inositol-4,5-bisphosphate) + ADP + H(+). The enzyme catalyses 1-octadecanoyl-2-(9Z)-octadecenoyl-sn-glycero-3-phospho-1D-myo-inositol 4-phosphate + ATP = 1-octadecanoyl-2-(9Z)-octadecenoyl-sn-glycero-3-phospho-1D-myo-inositol 4,5-bisphosphate + ADP + H(+). The catalysed reaction is 1-octadecanoyl-2-(9Z)-octadecenoyl-sn-glycero-3-phospho-1D-myo-inositol + ATP = 1-octadecanoyl-2-(9Z)-octadecenoyl-sn-glycero-3-phospho-1D-myo-inositol 5-phosphate + ADP + H(+). It carries out the reaction 1-octadecanoyl-2-(9Z,12Z)-octadecadienoyl-sn-glycero-3-phospho-1D-myo-inositol + ATP = 1-octadecanoyl-2-(9Z,12Z)-octadecadienoyl-sn-glycero-3-phospho-1D-myo-inositol 5-phosphate + ADP + H(+). It catalyses the reaction 1-octadecanoyl-2-(5Z,8Z,11Z,14Z-eicosatetraenoyl)-sn-glycero-3-phospho-(1D-myo-inositol) + ATP = 1-octadecanoyl-2-(5Z,8Z,11Z,14Z)-eicosatetraenoyl-sn-glycero-3-phospho-1D-myo-inositol 5-phosphate + ADP + H(+). The enzyme catalyses 1,2-di-(9Z,12Z)-octadecadienoyl-sn-glycero-3-phospho-1D-myo-inositol + ATP = 1,2-di(9Z,12Z)-octadecadienoyl-sn-glycero-3-phospho-1D-myo-inositol 5-phosphate + ADP + H(+). With respect to regulation, activated by phosphatidic acid. Catalyzes the phosphorylation of phosphatidylinositol 4-phosphate (PtdIns(4)P/PI4P) to form phosphatidylinositol 4,5-bisphosphate (PtdIns(4,5)P2/PIP2), a lipid second messenger that regulates several cellular processes such as signal transduction, vesicle trafficking, actin cytoskeleton dynamics, cell adhesion, and cell motility. PtdIns(4,5)P2 can directly act as a second messenger or can be utilized as a precursor to generate other second messengers: inositol 1,4,5-trisphosphate (IP3), diacylglycerol (DAG) or phosphatidylinositol-3,4,5-trisphosphate (PtdIns(3,4,5)P3/PIP3). PIP5K1A-mediated phosphorylation of PtdIns(4)P is the predominant pathway for PtdIns(4,5)P2 synthesis. Can also use phosphatidylinositol (PtdIns) as substrate in vitro. Together with PIP5K1C, is required for phagocytosis, both enzymes regulating different types of actin remodeling at sequential steps. Promotes particle ingestion by activating the WAS GTPase-binding protein that induces Arp2/3 dependent actin polymerization at the nascent phagocytic cup. Together with PIP5K1B, is required, after stimulation by G-protein coupled receptors, for the synthesis of IP3 that will induce stable platelet adhesion. Recruited to the plasma membrane by the E-cadherin/beta-catenin complex where it provides the substrate PtdIns(4,5)P2 for the production of PtdIns(3,4,5)P3, IP3 and DAG, that will mobilize internal calcium and drive keratinocyte differentiation. Positively regulates insulin-induced translocation of SLC2A4 to the cell membrane in adipocytes. Together with PIP5K1C has a role during embryogenesis. Independently of its catalytic activity, is required for membrane ruffling formation, actin organization and focal adhesion formation during directional cell migration by controlling integrin-induced translocation of the small GTPase RAC1 to the plasma membrane. Also functions in the nucleus where it acts as an activator of TUT1 adenylyltransferase activity in nuclear speckles, thereby regulating mRNA polyadenylation of a select set of mRNAs. In Mus musculus (Mouse), this protein is Phosphatidylinositol 4-phosphate 5-kinase type-1 alpha.